An 827-amino-acid chain; its full sequence is Glycerol-3-phosphate acyltransferase (827 aa).

The HXXXXD motif signature appears at 325-330; it reads CHRSHM.

The protein belongs to the GPAT/DAPAT family.

It localises to the cell inner membrane. The enzyme catalyses sn-glycerol 3-phosphate + an acyl-CoA = a 1-acyl-sn-glycero-3-phosphate + CoA. Its pathway is phospholipid metabolism; CDP-diacylglycerol biosynthesis; CDP-diacylglycerol from sn-glycerol 3-phosphate: step 1/3. This Shigella boydii serotype 4 (strain Sb227) protein is Glycerol-3-phosphate acyltransferase.